Reading from the N-terminus, the 387-residue chain is Protein phosphatase 2C 50 (387 aa).

One can recognise a PPM-type phosphatase domain in the interval 60-377 (VWGCASTRGR…DNITVIVVDL (318 aa)). The Mn(2+) site is built by Asp118 and Gly119. Positions 264–268 (VSGIL) match the Modulates binding affinity to PYR/PYL/RCAR abscisic acid intracellular receptors motif. Residues Asp306 and Asp368 each coordinate Mn(2+).

Belongs to the PP2C family. In terms of assembly, interacts with PYL3, PYL5, PYL9 and PYL10. Binding to PYL3, PYL5, PYL9 and PYL10 is dependent on the presence of abscisic acid (ABA). Interacts with SAPK10. Requires Mg(2+) as cofactor. It depends on Mn(2+) as a cofactor.

The catalysed reaction is O-phospho-L-seryl-[protein] + H2O = L-seryl-[protein] + phosphate. It carries out the reaction O-phospho-L-threonyl-[protein] + H2O = L-threonyl-[protein] + phosphate. Protein phosphatase involved in abscisic acid (ABA) signaling. Together with PYL3 and SAPK10, may form an ABA signaling module involved in stress response. The sequence is that of Protein phosphatase 2C 50 from Oryza sativa subsp. japonica (Rice).